The sequence spans 235 residues: Aspartate/glutamate leucyltransferase (235 aa).

This sequence belongs to the R-transferase family. Bpt subfamily.

The protein resides in the cytoplasm. The enzyme catalyses N-terminal L-glutamyl-[protein] + L-leucyl-tRNA(Leu) = N-terminal L-leucyl-L-glutamyl-[protein] + tRNA(Leu) + H(+). It carries out the reaction N-terminal L-aspartyl-[protein] + L-leucyl-tRNA(Leu) = N-terminal L-leucyl-L-aspartyl-[protein] + tRNA(Leu) + H(+). In terms of biological role, functions in the N-end rule pathway of protein degradation where it conjugates Leu from its aminoacyl-tRNA to the N-termini of proteins containing an N-terminal aspartate or glutamate. The protein is Aspartate/glutamate leucyltransferase of Pseudomonas paraeruginosa (strain DSM 24068 / PA7) (Pseudomonas aeruginosa (strain PA7)).